We begin with the raw amino-acid sequence, 169 residues long: MPEVDRFGRLPWLWITVLVFVLDQLSKAFFQAELSMYQQIVVIPDLFSWTLAYNTGAAFSFLADSSGWQRWLFALIAIVVSAILVVWLKRLKKGETWLAIALALVLGGALGNLYDRMVLGHVVDFILVHWQNRWYFPAFNLADSAITVGAVMLALDMFRSKKSGEAAHG.

The next 4 membrane-spanning stretches (helical) occupy residues 10–30 (LPWLWITVLVFVLDQLSKAFF), 40–60 (IVVIPDLFSWTLAYNTGAAFS), 68–88 (WQRWLFALIAIVVSAILVVWL), and 94–114 (GETWLAIALALVLGGALGNLY). Catalysis depends on residues Asp-124 and Asp-143. The helical transmembrane segment at 135–155 (YFPAFNLADSAITVGAVMLAL) threads the bilayer.

The protein belongs to the peptidase A8 family.

It localises to the cell inner membrane. The catalysed reaction is Release of signal peptides from bacterial membrane prolipoproteins. Hydrolyzes -Xaa-Yaa-Zaa-|-(S,diacylglyceryl)Cys-, in which Xaa is hydrophobic (preferably Leu), and Yaa (Ala or Ser) and Zaa (Gly or Ala) have small, neutral side chains.. The protein operates within protein modification; lipoprotein biosynthesis (signal peptide cleavage). Functionally, this protein specifically catalyzes the removal of signal peptides from prolipoproteins. This is Lipoprotein signal peptidase from Pseudomonas aeruginosa (strain UCBPP-PA14).